Here is a 350-residue protein sequence, read N- to C-terminus: Anthranilate phosphoribosyltransferase (350 aa).

Residues glycine 88, 91-92, threonine 96, 98-101, 116-124, and serine 128 contribute to the 5-phospho-alpha-D-ribose 1-diphosphate site; these read GD, NIST, and KHGGRSVSS. An anthranilate-binding site is contributed by glycine 88. Serine 100 lines the Mg(2+) pocket. Residue arginine 174 coordinates anthranilate. Mg(2+) contacts are provided by aspartate 233 and glutamate 234.

Belongs to the anthranilate phosphoribosyltransferase family. In terms of assembly, homodimer. Requires Mg(2+) as cofactor.

It carries out the reaction N-(5-phospho-beta-D-ribosyl)anthranilate + diphosphate = 5-phospho-alpha-D-ribose 1-diphosphate + anthranilate. It functions in the pathway amino-acid biosynthesis; L-tryptophan biosynthesis; L-tryptophan from chorismate: step 2/5. In terms of biological role, catalyzes the transfer of the phosphoribosyl group of 5-phosphorylribose-1-pyrophosphate (PRPP) to anthranilate to yield N-(5'-phosphoribosyl)-anthranilate (PRA). This chain is Anthranilate phosphoribosyltransferase, found in Albidiferax ferrireducens (strain ATCC BAA-621 / DSM 15236 / T118) (Rhodoferax ferrireducens).